A 550-amino-acid chain; its full sequence is 65-kDa microtubule-associated protein 5 (550 aa).

Coiled-coil stretches lie at residues 46-174 (NKKV…QKVN) and 288-310 (IREA…KELV). The interval 471–531 (QFREQKRLQG…PGRSVTSGGK (61 aa)) is disordered. The span at 502 to 511 (QSLNTDNVTK) shows a compositional bias: polar residues.

The protein belongs to the MAP65/ASE1 family. Forms a dimer. Binds to MT, mostly with coaligned MT, both between parallel or antiparallel, forming thick bundles. Bundles polymerized MT via the formation of 25-nm crossbridges with cortical MT.

The protein localises to the nucleus. It localises to the cytoplasm. It is found in the cytoskeleton. The protein resides in the spindle. Its subcellular location is the phragmoplast. The protein localises to the cell cortex. It localises to the cell junction. It is found in the plasmodesma. Functionally, microtubule-associated protein that bundle and stabilize adjacent microtubules (MT) of the cell cortex. Confers MT resistance to the drug oryzalin. Promotes the formation of a planar network of antiparallel microtubules. The polypeptide is 65-kDa microtubule-associated protein 5 (MAP65-5) (Arabidopsis thaliana (Mouse-ear cress)).